The following is a 71-amino-acid chain: MSRPQKLAIGLIKGYQVAISPFFPSTCRFYPTCSEYAVQAIGKYGLMRGGLRAVRRVLRCHPFSPGGYDPA.

It belongs to the UPF0161 family.

It is found in the cell membrane. Its function is as follows. Could be involved in insertion of integral membrane proteins into the membrane. The protein is Putative membrane protein insertion efficiency factor of Desulforudis audaxviator (strain MP104C).